The following is a 303-amino-acid chain: Elongation factor Ts (303 aa).

The tract at residues 81-84 (TDFV) is involved in Mg(2+) ion dislocation from EF-Tu.

It belongs to the EF-Ts family.

It is found in the cytoplasm. In terms of biological role, associates with the EF-Tu.GDP complex and induces the exchange of GDP to GTP. It remains bound to the aminoacyl-tRNA.EF-Tu.GTP complex up to the GTP hydrolysis stage on the ribosome. The sequence is that of Elongation factor Ts from Mesomycoplasma hyopneumoniae (strain 232) (Mycoplasma hyopneumoniae).